The sequence spans 289 residues: Acetylglutamate kinase (289 aa).

Substrate-binding positions include 60–61 (GG), Arg-82, and Asn-182.

Belongs to the acetylglutamate kinase family. ArgB subfamily.

Its subcellular location is the cytoplasm. It catalyses the reaction N-acetyl-L-glutamate + ATP = N-acetyl-L-glutamyl 5-phosphate + ADP. The protein operates within amino-acid biosynthesis; L-arginine biosynthesis; N(2)-acetyl-L-ornithine from L-glutamate: step 2/4. In terms of biological role, catalyzes the ATP-dependent phosphorylation of N-acetyl-L-glutamate. The sequence is that of Acetylglutamate kinase from Methanothrix thermoacetophila (strain DSM 6194 / JCM 14653 / NBRC 101360 / PT) (Methanosaeta thermophila).